The chain runs to 144 residues: Large ribosomal subunit protein uL14 (144 aa).

Belongs to the universal ribosomal protein uL14 family. Part of the 50S ribosomal subunit. Forms a cluster with proteins L3 and L24e, part of which may contact the 16S rRNA in 2 intersubunit bridges.

Its function is as follows. Binds to 23S rRNA. Forms part of two intersubunit bridges in the 70S ribosome. In Pyrobaculum islandicum (strain DSM 4184 / JCM 9189 / GEO3), this protein is Large ribosomal subunit protein uL14.